Here is a 273-residue protein sequence, read N- to C-terminus: Shikimate dehydrogenase (NADP(+)) (273 aa).

Residues 14-16 and Thr61 contribute to the shikimate site; that span reads SKS. Lys65 (proton acceptor) is an active-site residue. The shikimate site is built by Asn86 and Asp102. Residues 126–130, 150–155, and Met213 contribute to the NADP(+) site; these read GAGGA and NRTVAK. Tyr215 is a binding site for shikimate. Position 237 (Gly237) interacts with NADP(+).

The protein belongs to the shikimate dehydrogenase family. Homodimer.

The catalysed reaction is shikimate + NADP(+) = 3-dehydroshikimate + NADPH + H(+). It functions in the pathway metabolic intermediate biosynthesis; chorismate biosynthesis; chorismate from D-erythrose 4-phosphate and phosphoenolpyruvate: step 4/7. Its function is as follows. Involved in the biosynthesis of the chorismate, which leads to the biosynthesis of aromatic amino acids. Catalyzes the reversible NADPH linked reduction of 3-dehydroshikimate (DHSA) to yield shikimate (SA). In Tolumonas auensis (strain DSM 9187 / NBRC 110442 / TA 4), this protein is Shikimate dehydrogenase (NADP(+)).